The primary structure comprises 430 residues: Enolase (430 aa).

Q165 contributes to the (2R)-2-phosphoglycerate binding site. E207 functions as the Proton donor in the catalytic mechanism. Mg(2+) is bound by residues D244, E287, and D314. Residues K339, R368, S369, and K390 each coordinate (2R)-2-phosphoglycerate. K339 acts as the Proton acceptor in catalysis.

The protein belongs to the enolase family. As to quaternary structure, component of the RNA degradosome, a multiprotein complex involved in RNA processing and mRNA degradation. Mg(2+) is required as a cofactor.

Its subcellular location is the cytoplasm. It localises to the secreted. The protein localises to the cell surface. It catalyses the reaction (2R)-2-phosphoglycerate = phosphoenolpyruvate + H2O. The protein operates within carbohydrate degradation; glycolysis; pyruvate from D-glyceraldehyde 3-phosphate: step 4/5. Functionally, catalyzes the reversible conversion of 2-phosphoglycerate (2-PG) into phosphoenolpyruvate (PEP). It is essential for the degradation of carbohydrates via glycolysis. This Stenotrophomonas maltophilia (strain R551-3) protein is Enolase.